A 366-amino-acid polypeptide reads, in one-letter code: MKIIRIETSRIAVPLTKPFKTALRTVYTAESVIVRITYDSGAVGWGEAPPTLVITGDSMDSIESAIHHVLKPALLGKSLAGYEAILHDIQHLLTGNMSAKAAVEMALYDGWAQMCGLPLYQMLGGYRDTLETDYTVSVNSPEEMAADAENYLKQGFQTLKIKVGKDDIATDIARIQEIRKRVGSAVKLRLDANQGWRPKEAVTAIRKMEDAGLGIELVEQPVHKDDLAGLKKVTDATDTPIMADESVFTPRQAFEVLQTRSADLINIKLMKAGGISGAEKINAMAEACGVECMVGSMIETKLGITAAAHFAASKRNITRFDFDAPLMLKTDVFNGGITYSGSTISMPGKPGLGIIGAALLKGEKEQ.

Positions 24, 135, and 160 each coordinate substrate. Lys162 acts as the Proton acceptor; specific for (R)-substrate epimerization in catalysis. Mg(2+) contacts are provided by Asp191, Glu219, and Asp244. Lys268 (proton acceptor; specific for (S)-substrate epimerization) is an active-site residue. Substrate contacts are provided by Ser296, Ile298, Asp321, and Asp323.

It belongs to the mandelate racemase/muconate lactonizing enzyme family. In terms of assembly, homooctamer; tetramer of dimers. Mg(2+) is required as a cofactor.

It carries out the reaction L-alanyl-L-glutamate = L-alanyl-D-glutamate. The protein operates within cell wall degradation; peptidoglycan degradation. Its function is as follows. Catalyzes the epimerization of L-Ala-D-Glu to L-Ala-L-Glu and has probably a role in the metabolism of the murein peptide, of which L-Ala-D-Glu is a component. Is also able to catalyze the reverse reaction and the epimerization of the other Ala-X dipeptides L-Ala-L-Asp, L-Ala-L-Leu, L-Ala-L-Met, and L-Ala-L-Ser. Is not able to epimerize other L-Ala-X dipeptides. Is also active with L-Ser-L-Glu and, oddly, L-Pro-L-Glu, but not with L-Glu-L-Glu, L-Lys-L-Glu, L-Lys-L-Ala, or D-Ala-D-Ala. This chain is L-Ala-D/L-Glu epimerase (ykfB), found in Bacillus subtilis (strain 168).